The sequence spans 597 residues: Elongation factor 4 (597 aa).

Residues 2 to 184 (KNIRNFSIIA…EIVAKIPAPT (183 aa)) enclose the tr-type G domain. Residues 14 to 19 (DHGKST) and 131 to 134 (NKID) each bind GTP.

It belongs to the TRAFAC class translation factor GTPase superfamily. Classic translation factor GTPase family. LepA subfamily.

It is found in the cell inner membrane. It carries out the reaction GTP + H2O = GDP + phosphate + H(+). In terms of biological role, required for accurate and efficient protein synthesis under certain stress conditions. May act as a fidelity factor of the translation reaction, by catalyzing a one-codon backward translocation of tRNAs on improperly translocated ribosomes. Back-translocation proceeds from a post-translocation (POST) complex to a pre-translocation (PRE) complex, thus giving elongation factor G a second chance to translocate the tRNAs correctly. Binds to ribosomes in a GTP-dependent manner. This Neisseria gonorrhoeae (strain ATCC 700825 / FA 1090) protein is Elongation factor 4.